Here is a 142-residue protein sequence, read N- to C-terminus: Multiprotein-bridging factor 1b (142 aa).

A disordered region spans residues 49-75 (NAGSNKAASSGTSLNTKKLDDDTENLS). A compositionally biased stretch (polar residues) spans 50-64 (AGSNKAASSGTSLNT). Over residues 65–75 (KKLDDDTENLS) the composition is skewed to basic and acidic residues. The HTH cro/C1-type domain occupies 87–141 (IMQARGEKKLTQSQLAHLINEKPQVIQEYESGKAIPNQQILSKLERALGAKLRGK). Positions 98–117 (QSQLAHLINEKPQVIQEYES) form a DNA-binding region, H-T-H motif.

The protein belongs to the MBF1 family. Expressed in leaves, roots, stems, petioles and shoots. Higher expression in flowers and siliques. Detected in leaf veins through development.

The protein localises to the nucleus. Its subcellular location is the nucleolus. Its function is as follows. Transcriptional coactivator that stimulates transcriptional activity by bridging regulatory proteins and TBP, thereby recruiting TBP to promoters occupied by DNA-binding regulators. This chain is Multiprotein-bridging factor 1b (MBF1B), found in Arabidopsis thaliana (Mouse-ear cress).